The sequence spans 269 residues: Signal recognition particle receptor subunit beta (269 aa).

A helical transmembrane segment spans residues 35-55 (LLSVAVAVLAVLLTLVFWKFI). Residues 69–77 (GLCDSGKTL) and 90–93 (TQTS) contribute to the GTP site. Ser110 is subject to Phosphoserine. Residue Gly118 participates in GTP binding. Phosphothreonine is present on Thr212. GTP is bound at residue Ala246.

This sequence belongs to the SRP receptor beta subunit family. Heterodimer with SRPRA.

The protein resides in the endoplasmic reticulum membrane. Functionally, component of the signal recognition particle (SRP) complex receptor (SR). Ensures, in conjunction with the SRP complex, the correct targeting of the nascent secretory proteins to the endoplasmic reticulum membrane system. May mediate the membrane association of SR. This is Signal recognition particle receptor subunit beta (Srprb) from Rattus norvegicus (Rat).